The following is a 187-amino-acid chain: Ribosome-recycling factor (187 aa).

Belongs to the RRF family.

The protein resides in the cytoplasm. Responsible for the release of ribosomes from messenger RNA at the termination of protein biosynthesis. May increase the efficiency of translation by recycling ribosomes from one round of translation to another. In Rhodopseudomonas palustris (strain BisB18), this protein is Ribosome-recycling factor.